Here is a 1435-residue protein sequence, read N- to C-terminus: DNA polymerase III PolC-type (1435 aa).

One can recognise an Exonuclease domain in the interval 420-576; the sequence is YVVFDVETTG…YDTEATAYIF (157 aa).

It belongs to the DNA polymerase type-C family. PolC subfamily.

Its subcellular location is the cytoplasm. The enzyme catalyses DNA(n) + a 2'-deoxyribonucleoside 5'-triphosphate = DNA(n+1) + diphosphate. Its function is as follows. Required for replicative DNA synthesis. This DNA polymerase also exhibits 3' to 5' exonuclease activity. The polypeptide is DNA polymerase III PolC-type (Staphylococcus aureus).